The chain runs to 1193 residues: Probable cation-transporting ATPase 13A4 (1193 aa).

Topologically, residues 1-32 (MGDHLEKSQHALLNEGDENEMEIFGYRTQGCR) are cytoplasmic. Residues 33–53 (KALCLIGSIFSLGMLPLVFYW) lie within the membrane without spanning it. Over 54-198 (RPAWRVWANC…DVEITPIWKL (145 aa)) the chain is Cytoplasmic. A helical transmembrane segment spans residues 199–219 (LIKEVLNPFYIFQLFSVCLWF). Over 220–224 (SEDYK) the chain is Lumenal. Residues 225–245 (EYALAIILMSVISIALTVYDL) traverse the membrane as a helical segment. Residues 246-401 (RQQSVKLHHL…NFKLYRDAIR (156 aa)) lie on the Cytoplasmic side of the membrane. A helical membrane pass occupies residues 402–422 (FLLCLVGTATIGMVYTLCVYV). Over 423-437 (LSGEPPEEVVRKALD) the chain is Lumenal. A helical membrane pass occupies residues 438–458 (VITIAVPPALPAALTTGIIYA). Over 459 to 901 (QRRLKKKGIF…KEGRAALVTS (443 aa)) the chain is Cytoplasmic. The 4-aspartylphosphate intermediate role is filled by Asp487. Mg(2+) is bound by residues Asp849 and Asp853. Residues 902-922 (FCMFKYMALYSMIQYVGVLLL) traverse the membrane as a helical segment. The Lumenal portion of the chain corresponds to 923–933 (YWKTNSLSNYQ). A helical transmembrane segment spans residues 934–954 (FLFQDLAITTLIGVTMNLNGA). At 955–973 (NPKLVPFRPAGRLISPPLL) the chain is on the cytoplasmic side. Residues 974-994 (LSVVLNILLSLAMHIVGFILV) form a helical membrane-spanning segment. Topologically, residues 995-1036 (QKQPWYIMDYHSVCPVRNESASALAASPSVPEKTRSNSTFAS) are lumenal. Residues 1037–1057 (FENTTIWFLGTINCIFVALVF) traverse the membrane as a helical segment. The Cytoplasmic portion of the chain corresponds to 1058-1071 (SKGKPFRQPTYTNY). A helical transmembrane segment spans residues 1072–1092 (IFVLVLILQMGVCLFILFADI). Residues 1093-1105 (PEMHRRLDLLCTP) lie on the Lumenal side of the membrane. A helical membrane pass occupies residues 1106–1126 (VLWRVYILIMISSNFVVSLAV). The Cytoplasmic segment spans residues 1127-1193 (EKAIIENRAL…PVFESNEEQL (67 aa)).

Belongs to the cation transport ATPase (P-type) (TC 3.A.3) family. Type V subfamily. As to expression, expressed in brain and stomach.

The protein resides in the early endosome membrane. It localises to the late endosome membrane. Its subcellular location is the recycling endosome membrane. The catalysed reaction is ATP + H2O = ADP + phosphate + H(+). The chain is Probable cation-transporting ATPase 13A4 (Atp13a4) from Mus musculus (Mouse).